Reading from the N-terminus, the 1513-residue chain is Protein tincar (1513 aa).

The Cytoplasmic segment spans residues 1–77 (MGGKHQGSGA…DSGSYLHLNS (77 aa)). A helical transmembrane segment spans residues 78–98 (LWSIWYGVMLTLFQGYLAMHG). Residues 99–120 (AYRFLGCSLIPWKIEPVAELNL) are Extracellular-facing. A helical transmembrane segment spans residues 121–141 (QIVLSGVVFILLPVFFTSAVF). Topologically, residues 142–181 (KVGNLANDGIKLATGARERRCTLSPHDGLEEESRGGTLRA) are cytoplasmic. A helical membrane pass occupies residues 182 to 202 (LWTHGGPTAAFVHIVIALCLL). The Extracellular segment spans residues 203–668 (LPRLLLEARI…VAIFSQPPSA (466 aa)). Disordered stretches follow at residues 247–266 (TPFP…HQHG), 354–373 (ERQE…DEGV), and 383–532 (MPDF…SIHR). Residues 427 to 466 (ASSSSSSTTSTTTTTTTSTTTTAATTTSTRGTSTTTTTTT) are compositionally biased toward low complexity. The span at 478–507 (SAHHHHGKSRKHHKHHNKQRQQQPPRRHHV) shows a compositional bias: basic residues. The segment covering 523–532 (TTTRDSSIHR) has biased composition (basic and acidic residues). Residues 669–689 (EFVNLLCALLVWSVRYPAVFW) form a helical membrane-spanning segment. The Cytoplasmic portion of the chain corresponds to 690 to 696 (NTSKAFA). Residues 697-717 (CVFSLQMVVAALDIILGYVGI) form a helical membrane-spanning segment. Topologically, residues 718–736 (SNLYKLQIYAEAMPVHQPG) are extracellular. Residues 737–757 (LILNAVVTLALYLLSTALVLA) traverse the membrane as a helical segment. Topologically, residues 758-787 (SSMVMYLYGHGRLATRMRDRSIITLKTHQT) are cytoplasmic. Residues 788-808 (WIYFAHCASLCFVLALAVVKA) traverse the membrane as a helical segment. At 809 to 826 (PLLNDLSATYKNNLHCPT) the chain is on the extracellular side. Residues 827-847 (FLAALVGVTHLLLWIVIWLCL) traverse the membrane as a helical segment. Residues 848–1513 (TIKRRWHFKL…CGLYVTAQLH (666 aa)) lie on the Cytoplasmic side of the membrane. Composition is skewed to low complexity over residues 879-903 (SSGQ…VNGG) and 1060-1071 (QQQQQQQQQQRQ). Disordered stretches follow at residues 879 to 913 (SSGQ…MSTA), 1045 to 1090 (EYDE…SGLG), 1115 to 1155 (ASTS…HSAG), 1173 to 1214 (EHHH…PHQH), and 1231 to 1335 (AHIA…DPAA). The segment covering 1122-1149 (PPQPSAQAPPPPPPLPIKGAPVPQPPAV) has biased composition (pro residues). Composition is skewed to low complexity over residues 1179 to 1208 (LQHS…LQQQ) and 1255 to 1285 (TPRS…SGVH). Residues 1286–1296 (SGEERELEVII) are compositionally biased toward basic and acidic residues. Positions 1303-1314 (KPPPRPPQPPIQ) are enriched in pro residues. Residues 1324-1335 (MRMSSFNADPAA) are compositionally biased toward polar residues.

In terms of tissue distribution, expression varies in tissues throughout development. At stage 5, expressed in the embryo dorsal region followed by expression in a striped pattern at stage 6. During gastrulation, expressed in ventral region and ventral nerve cord. Also detected in many neurons in the externa sensilla and chordotonal organ. At stage 16, expressed on the surface of the midgut. Additionally, expressed in a subset of cardioblasts (Tin+ subpopulation) during dorsal vessel formation. In third-instar larval tissues, expressed in the eye and antennal disks. In the antennal disks, expressed in the second antennal segments. In the eye disks, strongest expression found in the ocelli, and in the differentiating ommatidial cells. Also expressed in all cells within and in the vicinity of the morphogenetic furrow.

The protein localises to the membrane. Its function is as follows. Involved in eye morphogenesis. May be essential for the normal differentiation of ommatidial cells. In Drosophila melanogaster (Fruit fly), this protein is Protein tincar (tinc).